A 139-amino-acid chain; its full sequence is ATP synthase epsilon chain (139 aa).

Belongs to the ATPase epsilon chain family. F-type ATPases have 2 components, CF(1) - the catalytic core - and CF(0) - the membrane proton channel. CF(1) has five subunits: alpha(3), beta(3), gamma(1), delta(1), epsilon(1). CF(0) has three main subunits: a, b and c.

The protein resides in the cell inner membrane. Its function is as follows. Produces ATP from ADP in the presence of a proton gradient across the membrane. This chain is ATP synthase epsilon chain, found in Erwinia tasmaniensis (strain DSM 17950 / CFBP 7177 / CIP 109463 / NCPPB 4357 / Et1/99).